A 730-amino-acid polypeptide reads, in one-letter code: 1,4-alpha-glucan branching enzyme GlgB (730 aa).

Aspartate 405 functions as the Nucleophile in the catalytic mechanism. The active-site Proton donor is the glutamate 458.

The protein belongs to the glycosyl hydrolase 13 family. GlgB subfamily. As to quaternary structure, monomer.

The enzyme catalyses Transfers a segment of a (1-&gt;4)-alpha-D-glucan chain to a primary hydroxy group in a similar glucan chain.. Its pathway is glycan biosynthesis; glycogen biosynthesis. Functionally, catalyzes the formation of the alpha-1,6-glucosidic linkages in glycogen by scission of a 1,4-alpha-linked oligosaccharide from growing alpha-1,4-glucan chains and the subsequent attachment of the oligosaccharide to the alpha-1,6 position. The chain is 1,4-alpha-glucan branching enzyme GlgB from Haemophilus influenzae (strain PittGG).